The sequence spans 312 residues: Very-long-chain 3-oxoacyl-CoA reductase-like protein At1g24470 (312 aa).

A helical membrane pass occupies residues 14–34; it reads LHFVCFIGFLFLLRVLFIPLL. Residue 52-81 coordinates NADP(+); sequence GSWAMVTGATEGIGRAFAHELAKHGLNLIL. Ser-190 serves as a coordination point for substrate. Tyr-205 acts as the Proton acceptor in catalysis.

The protein belongs to the short-chain dehydrogenases/reductases (SDR) family. In terms of tissue distribution, expressed in green siliques, flowers, inflorescence stems and leaves. Not detected in roots.

It localises to the endoplasmic reticulum membrane. Functionally, probable reductase, but unlike KCR1, has no beta-ketoacyl-coenzyme A reductase activity. The polypeptide is Very-long-chain 3-oxoacyl-CoA reductase-like protein At1g24470 (KCR2) (Arabidopsis thaliana (Mouse-ear cress)).